Consider the following 143-residue polypeptide: Ribonuclease HI (143 aa).

An RNase H type-1 domain is found at 1–136; the sequence is MQEIEIFCDG…CDSLAKLEAQ (136 aa). 4 residues coordinate Mg(2+): Asp-9, Glu-47, Asp-69, and Asp-128.

Belongs to the RNase H family. As to quaternary structure, monomer. The cofactor is Mg(2+).

It is found in the cytoplasm. The catalysed reaction is Endonucleolytic cleavage to 5'-phosphomonoester.. Endonuclease that specifically degrades the RNA of RNA-DNA hybrids. In Helicobacter pylori (strain ATCC 700392 / 26695) (Campylobacter pylori), this protein is Ribonuclease HI (rnhA).